Consider the following 193-residue polypeptide: Ion-translocating oxidoreductase complex subunit A (193 aa).

Helical transmembrane passes span 4–24, 39–59, 72–92, 102–122, 134–154, and 171–191; these read LLLILIGAVLVNNFVLARFLG, LGMGMAVTFVMVVASGCTWVL, LQTIAFILVIATLVQMVEMIV, SLGIFLPLITTNCAVLGLAVL, LVFAFGGAVGFTLALVLFAGL, and PIELITAGLLALAFMGFAGLV.

The protein belongs to the NqrDE/RnfAE family. In terms of assembly, the complex is composed of six subunits: RnfA, RnfB, RnfC, RnfD, RnfE and RnfG.

It localises to the cell inner membrane. Part of a membrane-bound complex that couples electron transfer with translocation of ions across the membrane. This is Ion-translocating oxidoreductase complex subunit A from Syntrophotalea carbinolica (strain DSM 2380 / NBRC 103641 / GraBd1) (Pelobacter carbinolicus).